The following is a 186-amino-acid chain: MSLREITQKAEAKMKKSVESFQHEIAAIRTGKATTALLDHVKVDAYGQTMPLKQIGNVGVQDAHTLMVQVWDKSMVAATEKAIRDANLGLNPVAEGQSIRVSIPPLNEERRKEYVKLTKKYGEDAKIALRNLRREMLHGADKLEKDKEIGEDAKANCKKDADNLVHKYEKQISDMIVQKEKEIMEV.

It belongs to the RRF family.

Its subcellular location is the cytoplasm. Responsible for the release of ribosomes from messenger RNA at the termination of protein biosynthesis. May increase the efficiency of translation by recycling ribosomes from one round of translation to another. This is Ribosome-recycling factor from Chlorobium phaeobacteroides (strain BS1).